A 236-amino-acid polypeptide reads, in one-letter code: 15,16-dihydrobiliverdin:ferredoxin oxidoreductase (236 aa).

Belongs to the HY2 family.

The enzyme catalyses 15,16-dihydrobiliverdin + oxidized 2[4Fe-4S]-[ferredoxin] = biliverdin IXalpha + reduced 2[4Fe-4S]-[ferredoxin] + 2 H(+). In terms of biological role, catalyzes the two-electron reduction of biliverdin IX-alpha at the C15 methine bridge. In Prochlorococcus marinus (strain MIT 9312), this protein is 15,16-dihydrobiliverdin:ferredoxin oxidoreductase.